The following is a 480-amino-acid chain: MAGVRHDDGSGLIAQRRPVRGEGATRSRGPSGPSNRNVSAADDPRRVALLAVHTSPLAQPGTGDAGGMNVYMLQSALHLARRGIEVEIFTRATASADPPVVRVAPGVLVRNVVAGPFEGLDKYDLPTQLCAFAAGVLRAEAVHEPGYYDIVHSHYWLSGQVGWLARDRWAVPLVHTAHTLAAVKNAALADGDGPEPPLRTVGEQQVVDEADRLIVNTDDEARQVISLHGADPARIDVVHPGVDLDVFRPGDRRAARAALGLPVDERVVAFVGRIQPLKAPDIVLRAAAKLPGVRIIVAGGPSGSGLASPDGLVRLADELGISARVTFLPPQSHTDLATLFRAADLVAVPSYSESFGLVAVEAQACGTPVVAAAVGGLPVAVRDGITGTLVSGHEVGQWADAIDHLLRLCAGPRGRVMSRAAARHAATFSWENTTDALLASYRRAIGEYNAERQRRGGEVISDLVAVGKPRHWTPRRGVGA.

The interval 1–42 (MAGVRHDDGSGLIAQRRPVRGEGATRSRGPSGPSNRNVSAAD) is disordered. A 1D-myo-inositol 3-phosphate-binding site is contributed by His53. UDP-N-acetyl-alpha-D-glucosamine contacts are provided by residues 59 to 60 (QP) and Gly67. Residues 64 to 69 (DAGGMN), Lys122, Tyr155, Thr179, and Arg199 contribute to the 1D-myo-inositol 3-phosphate site. The UDP-N-acetyl-alpha-D-glucosamine site is built by Arg273, Lys278, and Gln331. Mg(2+)-binding residues include Phe340, Arg341, and Ala343. UDP-N-acetyl-alpha-D-glucosamine-binding residues include Glu353 and Glu361. Thr367 contacts Mg(2+).

This sequence belongs to the glycosyltransferase group 1 family. MshA subfamily. As to quaternary structure, homodimer.

It carries out the reaction 1D-myo-inositol 3-phosphate + UDP-N-acetyl-alpha-D-glucosamine = 1D-myo-inositol 2-acetamido-2-deoxy-alpha-D-glucopyranoside 3-phosphate + UDP + H(+). Its function is as follows. Catalyzes the transfer of a N-acetyl-glucosamine moiety to 1D-myo-inositol 3-phosphate to produce 1D-myo-inositol 2-acetamido-2-deoxy-glucopyranoside 3-phosphate in the mycothiol (MSH) biosynthesis pathway. MSH and WhiB3 are probably part of a regulatory circuit that mediates gene expression upon acid stress (like that found in host macrophage phagosomes). MSH is one of the major redox buffers which protects bacteria against redox stressors and antibiotics; loss of MSH or ergothioneine (ERG, the other major redox buffer in this bacteria) leads to respiratory alterations and bioenergetic deficiencies that negatively impact virulence. This is D-inositol 3-phosphate glycosyltransferase (mshA) from Mycobacterium bovis (strain ATCC BAA-935 / AF2122/97).